The following is a 1106-amino-acid chain: Protein transport protein Sec31A (1106 aa).

7 WD repeats span residues Lys4–Glu47, Arg68–Lys111, Lys120–Thr160, Gln166–Lys206, Asp209–Arg254, Asn258–Glu298, and Thr301–Arg342. The segment at Pro161 to Lys471 is interaction with SEC13. The WD 8; interaction with SEC13 repeat unit spans residues Ser397–Ser430. Ser527 and Ser532 each carry phosphoserine. Lys647 participates in a covalent cross-link: Glycyl lysine isopeptide (Lys-Gly) (interchain with G-Cter in ubiquitin). The residue at position 799 (Ser799) is a Phosphoserine. The segment at Pro800–Pro999 is interaction with PDCD6. The short motif at Gly842–Asn848 is the ALG-2-binding site motif-2 (ABS-2) element. The interval Thr859–Asn980 is disordered. Residues Pro917–Pro939 are compositionally biased toward polar residues. Thr1047 is modified (phosphothreonine). A Phosphoserine modification is found at Ser1049. Lys1103 is covalently cross-linked (Glycyl lysine isopeptide (Lys-Gly) (interchain with G-Cter in ubiquitin)).

It belongs to the WD repeat SEC31 family. In terms of assembly, COPII is composed of at least 5 proteins: the SEC23/24 complex, the SEC13/31 complex and SAR1. SEC13 and SEC31 make a 2:2 tetramer that forms the edge element of the COPII outer coat. The tetramer self-assembles in multiple copies to form the complete polyhedral cage. Interacts (via WD 8) with SEC13. Interacts with PDCD6; interaction takes place in response to cytosolic calcium increase and leads to bridge together the BCR(KLHL12) complex and SEC31A, leading to monoubiquitination. Interacts with KLHL12. In terms of processing, monoubiquitinated by the BCR(KLHL12) E3 ubiquitin ligase complex, leading to regulate the size of COPII coats.

The protein localises to the cytoplasm. The protein resides in the cytoplasmic vesicle. It localises to the COPII-coated vesicle membrane. It is found in the endoplasmic reticulum membrane. Functionally, component of the coat protein complex II (COPII) which promotes the formation of transport vesicles from the endoplasmic reticulum (ER). The coat has two main functions, the physical deformation of the endoplasmic reticulum membrane into vesicles and the selection of cargo molecules. This Pongo abelii (Sumatran orangutan) protein is Protein transport protein Sec31A (SEC31A).